Consider the following 359-residue polypeptide: 4-hydroxy-3-methylbut-2-en-1-yl diphosphate synthase (flavodoxin) (359 aa).

[4Fe-4S] cluster-binding residues include cysteine 265, cysteine 268, cysteine 300, and glutamate 307.

Belongs to the IspG family. [4Fe-4S] cluster is required as a cofactor.

It catalyses the reaction (2E)-4-hydroxy-3-methylbut-2-enyl diphosphate + oxidized [flavodoxin] + H2O + 2 H(+) = 2-C-methyl-D-erythritol 2,4-cyclic diphosphate + reduced [flavodoxin]. Its pathway is isoprenoid biosynthesis; isopentenyl diphosphate biosynthesis via DXP pathway; isopentenyl diphosphate from 1-deoxy-D-xylulose 5-phosphate: step 5/6. Functionally, converts 2C-methyl-D-erythritol 2,4-cyclodiphosphate (ME-2,4cPP) into 1-hydroxy-2-methyl-2-(E)-butenyl 4-diphosphate. The chain is 4-hydroxy-3-methylbut-2-en-1-yl diphosphate synthase (flavodoxin) from Lawsonia intracellularis (strain PHE/MN1-00).